Consider the following 282-residue polypeptide: ATP phosphoribosyltransferase (282 aa).

It belongs to the ATP phosphoribosyltransferase family. Long subfamily. The cofactor is Mg(2+).

It is found in the cytoplasm. It catalyses the reaction 1-(5-phospho-beta-D-ribosyl)-ATP + diphosphate = 5-phospho-alpha-D-ribose 1-diphosphate + ATP. Its pathway is amino-acid biosynthesis; L-histidine biosynthesis; L-histidine from 5-phospho-alpha-D-ribose 1-diphosphate: step 1/9. Its activity is regulated as follows. Feedback inhibited by histidine. Its function is as follows. Catalyzes the condensation of ATP and 5-phosphoribose 1-diphosphate to form N'-(5'-phosphoribosyl)-ATP (PR-ATP). Has a crucial role in the pathway because the rate of histidine biosynthesis seems to be controlled primarily by regulation of HisG enzymatic activity. The protein is ATP phosphoribosyltransferase of Pyrobaculum aerophilum (strain ATCC 51768 / DSM 7523 / JCM 9630 / CIP 104966 / NBRC 100827 / IM2).